We begin with the raw amino-acid sequence, 128 residues long: MKKKHKRLLVASGIFFFLNCIVFFILTILRENISFFYTVSEAITLSNNQKPIRIGGMVVEDSVIRSESEVVFQMTDFNKSIVIKYQGILPPMFSEKSGVVVQGKMFDGNTFLAETVFAKHDENYMPRK.

Over 1-7 the chain is Cytoplasmic; sequence MKKKHKR. The chain crosses the membrane as a helical; Signal-anchor for type II membrane protein span at residues 8 to 28; the sequence is LLVASGIFFFLNCIVFFILTI. The Extracellular segment spans residues 29 to 128; sequence LRENISFFYT…KHDENYMPRK (100 aa). Heme contacts are provided by His-120 and Tyr-124.

Belongs to the CcmE/CycJ family.

The protein resides in the cell membrane. Heme chaperone required for the biogenesis of c-type cytochromes. Transiently binds heme delivered by CcmC and transfers the heme to apo-cytochromes in a process facilitated by CcmF and CcmH. This Wolbachia sp. subsp. Brugia malayi (strain TRS) protein is Cytochrome c-type biogenesis protein CcmE.